A 485-amino-acid chain; its full sequence is Sodium-coupled neutral amino acid symporter 1 (485 aa).

The Cytoplasmic segment spans residues 1-74 (MMHFKSGLEL…EYIPGTTSLG (74 aa)). Residue Ser6 is modified to Phosphoserine. Thr11 carries the phosphothreonine modification. A phosphoserine mark is found at Ser25, Ser28, Ser49, and Ser52. The residue at position 54 (Thr54) is a Phosphothreonine. Position 56 is a phosphoserine (Ser56). The chain crosses the membrane as a helical span at residues 75 to 97 (MSVFNLSNAIMGSGILGLAFALA). Residues 98–112 (NTGILLFLILLTSVT) lie on the Extracellular side of the membrane. Residues 113 to 133 (LLSIYSINLLLICSKETGCMV) form a helical membrane-spanning segment. At 134-148 (YEKLGEQVFGTTGKL) the chain is on the cytoplasmic side. A helical transmembrane segment spans residues 149–169 (VIFGATSLQNTGAMLSYLFIV). At 170–188 (KNELPSAIKSLMGEEDAFS) the chain is on the extracellular side. Residues 189-211 (AWYVDGRVLVVMVTFGIILPLCL) traverse the membrane as a helical segment. Topologically, residues 212 to 216 (LKNLG) are cytoplasmic. The chain crosses the membrane as a helical span at residues 217–237 (YLGYTSGFSLSCMMFFLIVVI). Topologically, residues 238-273 (YKKFQTPCMSVEQNSTVSANVTDACTPKYVTFNSKT) are extracellular. Cysteines 245 and 262 form a disulfide. N-linked (GlcNAc...) asparagine glycans are attached at residues Asn251 and Asn257. The helical transmembrane segment at 274 to 294 (VYALPTIAFAFVCHPSVLPIY) threads the bilayer. Residues 295 to 310 (SELKDRSQKKMQMVSN) lie on the Cytoplasmic side of the membrane. Residues 311–331 (ISFFAMFVMYFLTAIFGYLTF) form a helical membrane-spanning segment. At 332 to 348 (YEKVQSDLLHKYQSTGD) the chain is on the extracellular side. A helical transmembrane segment spans residues 349–369 (ILILTVRLAVIVAVILTVPVL). Topologically, residues 370 to 391 (FFTVRSSLFELAKKTKFHLCRH) are cytoplasmic. The chain crosses the membrane as a helical span at residues 392–412 (VLVTIILLIIINLLVIFIPSM). The Extracellular segment spans residues 413-414 (KD). Residues 415-435 (IFGVVGVTSANMLIFILPSSL) form a helical membrane-spanning segment. The Cytoplasmic segment spans residues 436–450 (YLKITNQDGDKGTQR). The helical transmembrane segment at 451–471 (IWAALFLGLGVLFSLISIPLV) threads the bilayer. Over 472 to 485 (IYDWACSSGTDEGH) the chain is Extracellular.

This sequence belongs to the amino acid/polyamine transporter 2 family. Post-translationally, N-glycosylation plays an important role in the L-glutamine transport. Specifically expressed in brain and retina (at protein level). Also detected in spleen, small intestine and lung.

The protein resides in the cell membrane. It catalyses the reaction L-glutamine(in) + Na(+)(in) = L-glutamine(out) + Na(+)(out). The catalysed reaction is L-alanine(in) + Na(+)(in) = L-alanine(out) + Na(+)(out). The enzyme catalyses L-histidine(in) + Na(+)(in) = L-histidine(out) + Na(+)(out). It carries out the reaction L-asparagine(in) + Na(+)(in) = L-asparagine(out) + Na(+)(out). It catalyses the reaction L-serine(in) + Na(+)(in) = L-serine(out) + Na(+)(out). The catalysed reaction is L-cysteine(in) + Na(+)(in) = L-cysteine(out) + Na(+)(out). The enzyme catalyses L-methionine(in) + Na(+)(in) = L-methionine(out) + Na(+)(out). It carries out the reaction glycine(in) + Na(+)(in) = glycine(out) + Na(+)(out). It catalyses the reaction L-threonine(in) + Na(+)(in) = L-threonine(out) + Na(+)(out). The catalysed reaction is L-proline(in) + Na(+)(in) = L-proline(out) + Na(+)(out). Its activity is regulated as follows. Inhibited by alpha-(methylamino)isobutyric acid (MeAIB). Inhibited by lithium, potassium, choline ions, N-methylglucamine. The pH dependence has an allosteric effect on the transport. Functionally, symporter that cotransports short-chain neutral amino acids and sodium ions from the extraccellular to the intracellular side of the cell membrane. The transport is elctrogenic, pH dependent and driven by the Na(+) electrochemical gradient. Participates in the astroglia-derived glutamine transport into GABAergic interneurons for neurotransmitter GABA de novo synthesis. May also contributes to amino acid transport in placental trophoblast. Regulates synaptic plasticity. This chain is Sodium-coupled neutral amino acid symporter 1, found in Mus musculus (Mouse).